The chain runs to 324 residues: Acetyl-coenzyme A carboxylase carboxyl transferase subunit alpha (324 aa).

A CoA carboxyltransferase C-terminal domain is found at 37–291 (ILEDKLENLE…DLMIRKTFEQ (255 aa)).

It belongs to the AccA family. Acetyl-CoA carboxylase is a heterohexamer composed of biotin carboxyl carrier protein (AccB), biotin carboxylase (AccC) and two subunits each of ACCase subunit alpha (AccA) and ACCase subunit beta (AccD).

The protein localises to the cytoplasm. The enzyme catalyses N(6)-carboxybiotinyl-L-lysyl-[protein] + acetyl-CoA = N(6)-biotinyl-L-lysyl-[protein] + malonyl-CoA. Its pathway is lipid metabolism; malonyl-CoA biosynthesis; malonyl-CoA from acetyl-CoA: step 1/1. Component of the acetyl coenzyme A carboxylase (ACC) complex. First, biotin carboxylase catalyzes the carboxylation of biotin on its carrier protein (BCCP) and then the CO(2) group is transferred by the carboxyltransferase to acetyl-CoA to form malonyl-CoA. The protein is Acetyl-coenzyme A carboxylase carboxyl transferase subunit alpha of Bacillus cereus (strain G9842).